Here is a 545-residue protein sequence, read N- to C-terminus: Toxin BC_0920 (545 aa).

One can recognise an LXG domain in the interval 1 to 217 (MSLNMYLGEV…ARQAANSIEE (217 aa)).

In the N-terminal section; belongs to the LXG family. This sequence in the C-terminal section; belongs to the bacterial EndoU family. In terms of assembly, probably interacts with cognate immunity protein BC_0921. The interaction inhibits the toxic activity of BC_0921.

The protein resides in the secreted. In terms of biological role, toxic component of an LXG toxin-immunity module. The C-terminus (residues 322-545) has RNase activity in E.coli which is neutralized by cognate immunity protein BC_0921, but not by immunity proteins specific to other toxins with the LXG domain. Degrades 5S rRNA and several tRNAs in vitro; cleavage is endonucleolytic within the anticodon loop for tRNA(GAU-Ile) and tRNA(UUC-Glu) but total for 5S rRNA and at least one other tRNA. RNase activity is suppressed by cognate immunity protein BC_0921. The sequence is that of Toxin BC_0920 from Bacillus cereus (strain ATCC 14579 / DSM 31 / CCUG 7414 / JCM 2152 / NBRC 15305 / NCIMB 9373 / NCTC 2599 / NRRL B-3711).